The primary structure comprises 92 residues: Small ribosomal subunit protein uS19 (92 aa).

This sequence belongs to the universal ribosomal protein uS19 family.

Functionally, protein S19 forms a complex with S13 that binds strongly to the 16S ribosomal RNA. The polypeptide is Small ribosomal subunit protein uS19 (Xanthobacter autotrophicus (strain ATCC BAA-1158 / Py2)).